A 558-amino-acid polypeptide reads, in one-letter code: 2-isopropylmalate synthase (558 aa).

Residues 28–304 (PIWCSVDLRD…DPELEFSNLN (277 aa)) enclose the Pyruvate carboxyltransferase domain. Mg(2+)-binding residues include D37, H243, H245, and N279. The tract at residues 438–558 (NRSPYYLKNY…VSALNRSKLK (121 aa)) is regulatory domain.

The protein belongs to the alpha-IPM synthase/homocitrate synthase family. LeuA type 2 subfamily. As to quaternary structure, homodimer. Mg(2+) is required as a cofactor.

The protein resides in the cytoplasm. The enzyme catalyses 3-methyl-2-oxobutanoate + acetyl-CoA + H2O = (2S)-2-isopropylmalate + CoA + H(+). The protein operates within amino-acid biosynthesis; L-leucine biosynthesis; L-leucine from 3-methyl-2-oxobutanoate: step 1/4. In terms of biological role, catalyzes the condensation of the acetyl group of acetyl-CoA with 3-methyl-2-oxobutanoate (2-ketoisovalerate) to form 3-carboxy-3-hydroxy-4-methylpentanoate (2-isopropylmalate). The sequence is that of 2-isopropylmalate synthase from Clostridium acetobutylicum (strain ATCC 824 / DSM 792 / JCM 1419 / IAM 19013 / LMG 5710 / NBRC 13948 / NRRL B-527 / VKM B-1787 / 2291 / W).